The chain runs to 271 residues: Putative phosphoenolpyruvate synthase regulatory protein (271 aa).

Residue Gly152 to Thr159 coordinates ADP.

This sequence belongs to the pyruvate, phosphate/water dikinase regulatory protein family. PSRP subfamily.

It carries out the reaction [pyruvate, water dikinase] + ADP = [pyruvate, water dikinase]-phosphate + AMP + H(+). The catalysed reaction is [pyruvate, water dikinase]-phosphate + phosphate + H(+) = [pyruvate, water dikinase] + diphosphate. Its function is as follows. Bifunctional serine/threonine kinase and phosphorylase involved in the regulation of the phosphoenolpyruvate synthase (PEPS) by catalyzing its phosphorylation/dephosphorylation. This chain is Putative phosphoenolpyruvate synthase regulatory protein, found in Legionella pneumophila (strain Corby).